The primary structure comprises 330 residues: Phenylalanine--tRNA ligase alpha subunit (330 aa).

Glu246 contributes to the Mg(2+) binding site.

Belongs to the class-II aminoacyl-tRNA synthetase family. Phe-tRNA synthetase alpha subunit type 1 subfamily. As to quaternary structure, tetramer of two alpha and two beta subunits. Requires Mg(2+) as cofactor.

The protein resides in the cytoplasm. The catalysed reaction is tRNA(Phe) + L-phenylalanine + ATP = L-phenylalanyl-tRNA(Phe) + AMP + diphosphate + H(+). This chain is Phenylalanine--tRNA ligase alpha subunit, found in Sulfurovum sp. (strain NBC37-1).